The chain runs to 476 residues: Nitrosuccinate lyase (476 aa).

Fumarate is bound by residues Arg137, Arg140, and Arg201. The active-site Proton acceptor is the Ser302. Lys308 and Asn310 together coordinate fumarate. Arg341 functions as the Proton donor in the catalytic mechanism.

It belongs to the class-II fumarase/aspartase family. As to quaternary structure, homotetramer.

It catalyses the reaction 2-nitrobutanedioate = fumarate + nitrite + H(+). The protein operates within antibiotic biosynthesis. Part of a gene cluster involved in the biosynthesis of cremeomycin, a light-sensitive o-diazoquinone with antibacterial and antiproliferative effects. Catalyzes the formation of nitrous acid from nitrosuccinic acid (2-nitrobutanedioate) by elimination of its nitro group. In Streptomyces cremeus, this protein is Nitrosuccinate lyase.